The primary structure comprises 507 residues: BPI fold-containing family C protein (507 aa).

A signal peptide spans 1-23 (MCTKTIPVLWGCFLLWNLYVSSS). N-linked (GlcNAc...) asparagine glycans are attached at residues Asn79, Asn92, and Asn113. Cys161 and Cys200 are joined by a disulfide. Asn213, Asn225, Asn257, Asn301, Asn355, Asn372, and Asn415 each carry an N-linked (GlcNAc...) asparagine glycan.

This sequence belongs to the BPI/LBP/Plunc superfamily. BPI/LBP family. As to expression, detected in the basal layer of the epidermis from inflammatory skin from psoriasis patients, but not in normal skin.

Its subcellular location is the secreted. This Homo sapiens (Human) protein is BPI fold-containing family C protein (BPIFC).